The chain runs to 82 residues: MVTIRLTRGGVKKRPFYQVVVTDSRSPRDGCFLEKVGFFNPTAQGQAERLRLDTDRINHWVGLGAQLSDRVAKLVKDNAVAA.

The protein belongs to the bacterial ribosomal protein bS16 family.

In Psychromonas ingrahamii (strain DSM 17664 / CCUG 51855 / 37), this protein is Small ribosomal subunit protein bS16.